The following is a 114-amino-acid chain: Tyrosine-protein phosphatase 13 (114 aa).

A Tyrosine-protein phosphatase domain is found at 1–114 (WRMLWEHNST…QFGQEGPITI (114 aa)). Residue E82 participates in substrate binding.

This sequence belongs to the protein-tyrosine phosphatase family.

It catalyses the reaction O-phospho-L-tyrosyl-[protein] + H2O = L-tyrosyl-[protein] + phosphate. The protein is Tyrosine-protein phosphatase 13 (STY-13) of Styela plicata (Wrinkled sea squirt).